The primary structure comprises 279 residues: Thymidylate synthase (279 aa).

Position 133–134 (133–134) interacts with dUMP; sequence RR. Cysteine 154 acts as the Nucleophile in catalysis. Residues 178–181, asparagine 189, and 219–221 contribute to the dUMP site; these read RSND and HIY. Aspartate 181 lines the (6R)-5,10-methylene-5,6,7,8-tetrahydrofolate pocket. Alanine 278 contributes to the (6R)-5,10-methylene-5,6,7,8-tetrahydrofolate binding site.

It belongs to the thymidylate synthase family. Bacterial-type ThyA subfamily. In terms of assembly, homodimer.

The protein localises to the cytoplasm. The catalysed reaction is dUMP + (6R)-5,10-methylene-5,6,7,8-tetrahydrofolate = 7,8-dihydrofolate + dTMP. Its pathway is pyrimidine metabolism; dTTP biosynthesis. In terms of biological role, catalyzes the reductive methylation of 2'-deoxyuridine-5'-monophosphate (dUMP) to 2'-deoxythymidine-5'-monophosphate (dTMP) while utilizing 5,10-methylenetetrahydrofolate (mTHF) as the methyl donor and reductant in the reaction, yielding dihydrofolate (DHF) as a by-product. This enzymatic reaction provides an intracellular de novo source of dTMP, an essential precursor for DNA biosynthesis. The polypeptide is Thymidylate synthase (Streptococcus pyogenes serotype M6 (strain ATCC BAA-946 / MGAS10394)).